The sequence spans 122 residues: Large ribosomal subunit protein uL18 (122 aa).

It belongs to the universal ribosomal protein uL18 family. In terms of assembly, part of the 50S ribosomal subunit; part of the 5S rRNA/L5/L18/L25 subcomplex. Contacts the 5S and 23S rRNAs.

Functionally, this is one of the proteins that bind and probably mediate the attachment of the 5S RNA into the large ribosomal subunit, where it forms part of the central protuberance. The chain is Large ribosomal subunit protein uL18 from Lachnoclostridium phytofermentans (strain ATCC 700394 / DSM 18823 / ISDg) (Clostridium phytofermentans).